The chain runs to 231 residues: Orotidine 5'-phosphate decarboxylase (231 aa).

Residues aspartate 12, lysine 34, 61–70, threonine 120, arginine 181, glutamine 190, glycine 210, and arginine 211 contribute to the substrate site; that span reads DLKFHDIPNT. Lysine 63 acts as the Proton donor in catalysis.

It belongs to the OMP decarboxylase family. Type 1 subfamily. In terms of assembly, homodimer.

It carries out the reaction orotidine 5'-phosphate + H(+) = UMP + CO2. It functions in the pathway pyrimidine metabolism; UMP biosynthesis via de novo pathway; UMP from orotate: step 2/2. Catalyzes the decarboxylation of orotidine 5'-monophosphate (OMP) to uridine 5'-monophosphate (UMP). The chain is Orotidine 5'-phosphate decarboxylase from Alcanivorax borkumensis (strain ATCC 700651 / DSM 11573 / NCIMB 13689 / SK2).